The primary structure comprises 110 residues: Large ribosomal subunit protein uL22 (110 aa).

This sequence belongs to the universal ribosomal protein uL22 family. Part of the 50S ribosomal subunit.

Functionally, this protein binds specifically to 23S rRNA; its binding is stimulated by other ribosomal proteins, e.g. L4, L17, and L20. It is important during the early stages of 50S assembly. It makes multiple contacts with different domains of the 23S rRNA in the assembled 50S subunit and ribosome. Its function is as follows. The globular domain of the protein is located near the polypeptide exit tunnel on the outside of the subunit, while an extended beta-hairpin is found that lines the wall of the exit tunnel in the center of the 70S ribosome. This Maridesulfovibrio salexigens (strain ATCC 14822 / DSM 2638 / NCIMB 8403 / VKM B-1763) (Desulfovibrio salexigens) protein is Large ribosomal subunit protein uL22.